Here is a 395-residue protein sequence, read N- to C-terminus: MKGISKILSASIALMKLENVYSATALCSNAYGLTPGQQGMAQQPSYVLIPSTPGTIANCASGSQDTYSPSPAAPTSPVTPGKTSENETSPSAPAEDVGTCKIAVLKHCDAPGTTSGTTPGSGPCETPEQQQPLSVISTTPAVPVTVESAQSPSVVPVVPVVAHHQAVPGYYNNGTSGIPGQQQILSGTLPPGATLCQGQAMPSTPGQQQILSGTLPPGVTLCQGQATPSTPGQQQVLSGTLPPGVTLCQGQATPSTPGQQQVLSGTLLPGATLCQDQGMPGTSGVPGQQGQSSGQCCAPQIPNPVMPPSMNISGNGYPSSTAYSPNLGSLGSCVDIQKTGGTSCEQKPEKSATQYAMEACATPTPTVIIGNSEYLVGPGMYNAINSPCNTAVQCC.

An N-terminal signal peptide occupies residues 1–22 (MKGISKILSASIALMKLENVYS). Disordered regions lie at residues 59–95 (CASG…APAE) and 111–133 (PGTT…QQPL). Over residues 68–80 (SPSPAAPTSPVTP) the composition is skewed to low complexity. Residues 81-91 (GKTSENETSPS) are compositionally biased toward polar residues. N-linked (GlcNAc...) asparagine glycosylation occurs at asparagine 86. A compositionally biased stretch (low complexity) spans 111 to 128 (PGTTSGTTPGSGPCETPE). N-linked (GlcNAc...) asparagine glycosylation is present at asparagine 173. 4 repeat units span residues 179-204 (PGQQ…MPST), 205-230 (PGQQ…TPST), 231-256 (PGQQ…TPST), and 257-282 (PGQQ…MPGT). The segment at 179–282 (PGQQQILSGT…LCQDQGMPGT (104 aa)) is 4 X 26 AA approximate tandem repeats. Positions 277–300 (QGMPGTSGVPGQQGQSSGQCCAPQ) are disordered. Positions 280 to 300 (PGTSGVPGQQGQSSGQCCAPQ) are enriched in low complexity. Residue asparagine 311 is glycosylated (N-linked (GlcNAc...) asparagine).

In terms of assembly, interacts with PTP2 and PTP3.

The protein localises to the spore polar tube. Its function is as follows. Involved with PTP2 and PTP3 in the formation of the polar tube through which the infectious agent is passed on to the host cell. Accounts for at least 70 percent of the mass of the polar tube. The protein is Polar tube protein 1 (PTP1) of Encephalitozoon cuniculi (strain GB-M1) (Microsporidian parasite).